Consider the following 159-residue polypeptide: Large ribosomal subunit protein uL22 (159 aa).

This sequence belongs to the universal ribosomal protein uL22 family. As to quaternary structure, part of the 50S ribosomal subunit.

Its function is as follows. This protein binds specifically to 23S rRNA. It makes multiple contacts with different domains of the 23S rRNA in the assembled 50S subunit and ribosome. In terms of biological role, the globular domain of the protein is located near the polypeptide exit tunnel on the outside of the subunit, while an extended beta-hairpin is found that lines the wall of the exit tunnel in the center of the 70S ribosome. The chain is Large ribosomal subunit protein uL22 from Ignicoccus hospitalis (strain KIN4/I / DSM 18386 / JCM 14125).